The sequence spans 77 residues: U14-theraphotoxin-Cg1a 2 (77 aa).

The N-terminal stretch at 1–21 (MKTSVLLVILGIAAITVQCTA) is a signal peptide. The propeptide occupies 22–49 (SESVKQDSLRTFVDAVLGWNAEMASEAR). Disulfide bonds link Cys-50-Cys-64, Cys-57-Cys-69, and Cys-63-Cys-75. Lys-77 is subject to Lysine amide.

It belongs to the neurotoxin 10 (Hwtx-1) family. 65 (Jztx-21) subfamily. In terms of tissue distribution, expressed by the venom gland.

It is found in the secreted. Probable ion channel inhibitor. The protein is U14-theraphotoxin-Cg1a 2 of Chilobrachys guangxiensis (Chinese earth tiger tarantula).